We begin with the raw amino-acid sequence, 475 residues long: Aspartate ammonia-lyase (475 aa).

Residues T104, S143, T144, N145, T190, and H191 each contribute to the L-aspartate site. Residues 320-329 form an SS loop region; it reads GSSIMPGKVN. The Proton acceptor role is filled by S321. Residues S322 and K327 each coordinate L-aspartate.

It belongs to the class-II fumarase/aspartase family. Aspartase subfamily. As to quaternary structure, homotetramer.

It catalyses the reaction L-aspartate = fumarate + NH4(+). In terms of biological role, catalyzes the reversible conversion of L-aspartate to fumarate and ammonia. This is Aspartate ammonia-lyase from Bacillus subtilis (strain 168).